Here is a 356-residue protein sequence, read N- to C-terminus: Calcium/calmodulin-dependent protein kinase type 1 (356 aa).

The Nuclear localization signal signature appears at proline 2–arginine 7. One can recognise a Protein kinase domain in the interval tyrosine 22 to isoleucine 278. ATP is bound by residues leucine 28–valine 36 and lysine 52. Aspartate 144 acts as the Proton acceptor in catalysis. Threonine 179 carries the post-translational modification Phosphothreonine; by ckk-1. The autoinhibitory domain stretch occupies residues isoleucine 278–leucine 318. Positions lysine 298 to glutamine 319 are calmodulin-binding.

The protein belongs to the protein kinase superfamily. CAMK Ser/Thr protein kinase family. CaMK subfamily. Requires Mg(2+) as cofactor.

It is found in the nucleus. Its subcellular location is the cytoplasm. It catalyses the reaction L-seryl-[protein] + ATP = O-phospho-L-seryl-[protein] + ADP + H(+). The catalysed reaction is L-threonyl-[protein] + ATP = O-phospho-L-threonyl-[protein] + ADP + H(+). With respect to regulation, activated by Ca(2+)/calmodulin. Binding of calmodulin results in a conformational change that generates functional binding sites for both substrate and ATP, and thus relieves autoinhibition and lowers the Km of substrate binding. Must be phosphorylated by ckk-1 to be maximally active but this does not appear to be required for activity in AFD neurons. In terms of biological role, calcium/calmodulin-dependent protein kinase that operates in the calcium-triggered CaMKK-CaMK1 signaling cascade which results in transcriptional activation. Transcriptional activation occurs at least in part through phosphorylation of crh-1. Regulates gene expression, sensory morphology, and function of the AFD thermosensory neurons. Involved in long-term adaptation of AFD neurons to temperatures warmer than the initial acclimatized cultivation temperature. Acts in the FLP thermal nociceptors to moderate the responsiveness to noxious heat and controls neuropeptide release from FLP neurons in response to temperature elevations. Regulates the dauer decision, the decision of the larvae to enter into the alternative stress-resistant and long-lived dauer developmental stage, based on the feeding state, primarily in the AWC sensory neurons. Acts non cell-autonomously in the AWC neurons to regulate expression of the daf-28 insulin-like peptide and cell-autonomously in the ASI sensory neurons to regulate expression of the growth promoting daf-7 in a food-regulated manner. Plays a role in memory-based thermal response of an individual AFD neuron cell. Involved in chemotaxis response in AWC neurons to attractant 2-heptanone, a volatile organic compound emitted by the nematode pathogenic bacterium B.nematocida B16. Represses transcription of glutamate receptor glr-1 in the nucleus basally and in response to change in synaptic activity. This chain is Calcium/calmodulin-dependent protein kinase type 1 (cmk-1), found in Caenorhabditis briggsae.